The primary structure comprises 543 residues: MRVLPATLLVGAATAAAPPFQQILGLPKKSADTLAKPLHDLQEQLKTLSGEARHLWDEVASHFPNNMDHNPVFSLPKKHTRRPDSHWDHIVRGADVQSVWVAGASGEKEREIDGKLEAYDLRVKKTDPSALGIDPGVKQYTGYLDDNENDKHLFYWFFESRNDPKNDPVVLWLNGGPGCSSLTGLFLELGPSSINEKIKPIYNDFAWNSNASVIFLDQPVNVGYSYSGAAVSDTVAAGKDVYALLTLFFKQFPEYAKQDFHIAGESYAGHYIPVFASEILSHKKRNINLKSVLIGNGLTDGLTQYDYYRPMACGEGGYPAVLDESSCQSMDNALPRCKSMIESCYNTESSWICVPASIYCNNALLGPYQRTGQNVYDIRGKCEDSSNLCYKGMGYVSEYLNKREVREAVGAEVDGYESCNFDINRNFLFHGDWMKPYHRLVPGLLEQIPVLIYAGDADFICNWLGNKAWTEALEWPGQKEYAPLPLKDLVIEENEHKGKKIGQIKSHGNFTFMRLYGAGHMVPMDQPEASLEFFNRWLGGEWF.

The signal sequence occupies residues 1–17 (MRVLPATLLVGAATAAA). A propeptide spanning residues 18–124 (PPFQQILGLP…KLEAYDLRVK (107 aa)) is cleaved from the precursor. Cystine bridges form between C179–C419, C313–C327, C337–C360, C344–C353, and C382–C389. N210 carries N-linked (GlcNAc...) asparagine glycosylation. Residue S266 is part of the active site. D458 is an active-site residue. Residue N509 is glycosylated (N-linked (GlcNAc...) asparagine). The active site involves H520.

This sequence belongs to the peptidase S10 family.

It is found in the vacuole. It carries out the reaction Release of a C-terminal amino acid with broad specificity.. Its function is as follows. Vacuolar carboxypeptidase involved in degradation of small peptides. Digests preferentially peptides containing an aliphatic or hydrophobic residue in P1' position, as well as methionine, leucine or phenylalanine in P1 position of ester substrate. In Aspergillus fumigatus (strain ATCC MYA-4609 / CBS 101355 / FGSC A1100 / Af293) (Neosartorya fumigata), this protein is Carboxypeptidase Y homolog A (cpyA).